The chain runs to 706 residues: Elongation factor G (706 aa).

Residues 8 to 295 (ELYRNFGIMA…AVIDYLPSPL (288 aa)) enclose the tr-type G domain. GTP-binding positions include 17 to 24 (AHIDAGKT), 92 to 96 (DTPGH), and 146 to 149 (NKMD).

The protein belongs to the TRAFAC class translation factor GTPase superfamily. Classic translation factor GTPase family. EF-G/EF-2 subfamily.

Its subcellular location is the cytoplasm. In terms of biological role, catalyzes the GTP-dependent ribosomal translocation step during translation elongation. During this step, the ribosome changes from the pre-translocational (PRE) to the post-translocational (POST) state as the newly formed A-site-bound peptidyl-tRNA and P-site-bound deacylated tRNA move to the P and E sites, respectively. Catalyzes the coordinated movement of the two tRNA molecules, the mRNA and conformational changes in the ribosome. The protein is Elongation factor G of Ruegeria sp. (strain TM1040) (Silicibacter sp.).